A 557-amino-acid chain; its full sequence is Dihydroxy-acid dehydratase 1 (557 aa).

Cys50 is a binding site for [2Fe-2S] cluster. Asp82 contributes to the Mg(2+) binding site. Cys123 is a [2Fe-2S] cluster binding site. Residues Asp124 and Lys125 each coordinate Mg(2+). N6-carboxylysine is present on Lys125. Cys195 provides a ligand contact to [2Fe-2S] cluster. A Mg(2+)-binding site is contributed by Glu447. Residue Ser473 is the Proton acceptor of the active site.

It belongs to the IlvD/Edd family. Homodimer. Requires [2Fe-2S] cluster as cofactor. It depends on Mg(2+) as a cofactor.

It carries out the reaction (2R)-2,3-dihydroxy-3-methylbutanoate = 3-methyl-2-oxobutanoate + H2O. The catalysed reaction is (2R,3R)-2,3-dihydroxy-3-methylpentanoate = (S)-3-methyl-2-oxopentanoate + H2O. It functions in the pathway amino-acid biosynthesis; L-isoleucine biosynthesis; L-isoleucine from 2-oxobutanoate: step 3/4. The protein operates within amino-acid biosynthesis; L-valine biosynthesis; L-valine from pyruvate: step 3/4. Functionally, functions in the biosynthesis of branched-chain amino acids. Catalyzes the dehydration of (2R,3R)-2,3-dihydroxy-3-methylpentanoate (2,3-dihydroxy-3-methylvalerate) into 2-oxo-3-methylpentanoate (2-oxo-3-methylvalerate) and of (2R)-2,3-dihydroxy-3-methylbutanoate (2,3-dihydroxyisovalerate) into 2-oxo-3-methylbutanoate (2-oxoisovalerate), the penultimate precursor to L-isoleucine and L-valine, respectively. This is Dihydroxy-acid dehydratase 1 from Cupriavidus pinatubonensis (strain JMP 134 / LMG 1197) (Cupriavidus necator (strain JMP 134)).